The sequence spans 248 residues: 2,3-bisphosphoglycerate-dependent phosphoglycerate mutase (248 aa).

Substrate contacts are provided by residues 8-15, 21-22, Arg-60, 87-90, Lys-98, 114-115, and 183-184; these read RHGESQWN, TG, ERHY, RR, and GN. The active-site Tele-phosphohistidine intermediate is His-9. The active-site Proton donor/acceptor is the Glu-87.

This sequence belongs to the phosphoglycerate mutase family. BPG-dependent PGAM subfamily. In terms of assembly, homodimer.

The catalysed reaction is (2R)-2-phosphoglycerate = (2R)-3-phosphoglycerate. It functions in the pathway carbohydrate degradation; glycolysis; pyruvate from D-glyceraldehyde 3-phosphate: step 3/5. Functionally, catalyzes the interconversion of 2-phosphoglycerate and 3-phosphoglycerate. This Alteromonas mediterranea (strain DSM 17117 / CIP 110805 / LMG 28347 / Deep ecotype) protein is 2,3-bisphosphoglycerate-dependent phosphoglycerate mutase.